Consider the following 883-residue polypeptide: Alanine--tRNA ligase (883 aa).

Zn(2+) contacts are provided by H562, H566, C675, and H679.

The protein belongs to the class-II aminoacyl-tRNA synthetase family. Zn(2+) is required as a cofactor.

The protein resides in the cytoplasm. It carries out the reaction tRNA(Ala) + L-alanine + ATP = L-alanyl-tRNA(Ala) + AMP + diphosphate. In terms of biological role, catalyzes the attachment of alanine to tRNA(Ala) in a two-step reaction: alanine is first activated by ATP to form Ala-AMP and then transferred to the acceptor end of tRNA(Ala). Also edits incorrectly charged Ser-tRNA(Ala) and Gly-tRNA(Ala) via its editing domain. The chain is Alanine--tRNA ligase from Ruegeria sp. (strain TM1040) (Silicibacter sp.).